The primary structure comprises 590 residues: J protein JJJ1 (590 aa).

The 70-residue stretch at 3 to 72 (TCYYELLGVE…RAWYDSHKEQ (70 aa)) folds into the J domain. A compositionally biased stretch (basic and acidic residues) spans 269–284 (EQRKLKEQQRKNELNN). Residues 269 to 293 (EQRKLKEQQRKNELNNRRKFGNDNN) form a disordered region. The C2H2-type 1 zinc finger occupies 338 to 362 (YECFICNKTFKSEKQLKNHINTKLH). At Ser-393 the chain carries Phosphoserine. Residues 441-546 (EVEDVSSDEN…TLPSSMSPTS (106 aa)) are disordered. Residues 455 to 467 (TKNKKKRKKKKKA) are compositionally biased toward basic residues. The segment covering 480–489 (DDTKDKRSNE) has biased composition (basic and acidic residues). Residue Thr-504 is modified to Phosphothreonine. Residues 513–527 (KAKKKKGKQPKKNSK) show a composition bias toward basic residues. Over residues 528–546 (STKSTPSLSTLPSSMSPTS) the composition is skewed to low complexity. The segment at 549–573 (EVCTTCGESFDSRNKLFNHVKIAGH) adopts a C2H2-type 2 zinc-finger fold.

It is found in the nucleus. The polypeptide is J protein JJJ1 (JJJ1) (Saccharomyces cerevisiae (strain ATCC 204508 / S288c) (Baker's yeast)).